The following is a 275-amino-acid chain: Large ribosomal subunit protein uL2 (275 aa).

A disordered region spans residues 224–275; the sequence is VMNPVDHPHGGGEGKSPIGRPSPVTPWGKPTLGYKTRKKNKASDKFIIKRRK. Over residues 264-275 the composition is skewed to basic and acidic residues; that stretch reads KASDKFIIKRRK.

It belongs to the universal ribosomal protein uL2 family. As to quaternary structure, part of the 50S ribosomal subunit. Forms a bridge to the 30S subunit in the 70S ribosome.

Functionally, one of the primary rRNA binding proteins. Required for association of the 30S and 50S subunits to form the 70S ribosome, for tRNA binding and peptide bond formation. It has been suggested to have peptidyltransferase activity; this is somewhat controversial. Makes several contacts with the 16S rRNA in the 70S ribosome. The sequence is that of Large ribosomal subunit protein uL2 from Acetivibrio thermocellus (strain ATCC 27405 / DSM 1237 / JCM 9322 / NBRC 103400 / NCIMB 10682 / NRRL B-4536 / VPI 7372) (Clostridium thermocellum).